The following is a 1026-amino-acid chain: Multidrug resistance protein MdtC (1026 aa).

11 helical membrane-spanning segments follow: residues 15 to 35 (ILIA…LPVA), 333 to 353 (EVEE…FLFL), 360 to 380 (LIPA…MYLC), 387 to 407 (LSLM…IVVL), 431 to 451 (VGFT…PLLL), 463 to 483 (FAVT…TLTP), 528 to 548 (LVGV…IAIP), 853 to 873 (LILI…LYES), 897 to 917 (LFNA…IGIV), 953 to 973 (PIMM…LSGG), and 984 to 1004 (ITIV…TPVV).

This sequence belongs to the resistance-nodulation-cell division (RND) (TC 2.A.6) family. MdtC subfamily. As to quaternary structure, part of a tripartite efflux system composed of MdtA, MdtB and MdtC. MdtC forms a heteromultimer with MdtB.

The protein localises to the cell inner membrane. This chain is Multidrug resistance protein MdtC, found in Salmonella choleraesuis (strain SC-B67).